The primary structure comprises 856 residues: MPRKATTPMMEQYYQIKDQYPDAFLFYRVGDFYELYEDDAIKGSQILELTLTHRSNKSENPIPMAGVPHMAVDSYVNTLVEKGYKVAICEQLEDPKKAKGMVKRGIIQLVTPGTKMAQGPDDSQESNYLTSVVEKAGGYGLAYSDLSTGEIFVTHVKHYAEVVNELLSLRTREVVFAGNLSASDRDRLQKANITVSEPAELEGEHAEISYVQQKLTDSMEKAAVRQLVVYLLATQKRSLAHLQVAESFEIGQYLQMANTVQRNLELTQSATTGRKQGSLFWVLDKTTTAMGGRLLKQWLSRPLLSLDRIKQRQQMVQALLDDYFTRENIVDSLKGVYDLERLSGRVAFGNVNPRELLQLAKSLEATKLIIQTLVESGNPDLEKYGQGIDPQSELAESITNCLVDQPPISAKDGGIIRAGVSEDLDKYREAMNGGKKWLAQMEMEERQRTGIDNLKIGYNRVFGYFIQVSKGNVAKVPQDRYTRKQTLTNADRYITPELKEHENLILEAESRSTDLEYELFSQLREAVKAHIPDLQELGRQLAALDVFVAFAQDAEEKNYCRPSFSSKNEIAVKNGRHPVVGAVLPAGSYIPNDLVMDEDTSIYLITGPNMSGKSTYMRQLALIAIMAQIGSFVPADSAKLPVFDQVFTRIGAADDLYSGKSTFMVEMSEANEALQHASSRSLVLFDEIGRGTATYDGMALAGAIIKYLHDKVGAKTLFATHYHELTELDETLLHLKNIHVGATEENGKLIFLHKILPGPADQSYGIHVAKLAGLPRVVLREASSMLKRLEAEGAREINPSRQQLDLFSPVEVVEENPLKAEQEELLDEISQVNLNEKTPLEVMQLVADWQQALKEE.

607-614 (GPNMSGKS) contributes to the ATP binding site.

Belongs to the DNA mismatch repair MutS family.

This protein is involved in the repair of mismatches in DNA. It is possible that it carries out the mismatch recognition step. This protein has a weak ATPase activity. This chain is DNA mismatch repair protein MutS, found in Lactobacillus delbrueckii subsp. bulgaricus (strain ATCC 11842 / DSM 20081 / BCRC 10696 / JCM 1002 / NBRC 13953 / NCIMB 11778 / NCTC 12712 / WDCM 00102 / Lb 14).